Reading from the N-terminus, the 557-residue chain is UvrABC system protein C (557 aa).

The region spanning Glu-14 to Val-89 is the GIY-YIG domain. Positions Glu-194–Val-229 constitute a UVR domain.

This sequence belongs to the UvrC family. Interacts with UvrB in an incision complex.

It localises to the cytoplasm. The UvrABC repair system catalyzes the recognition and processing of DNA lesions. UvrC both incises the 5' and 3' sides of the lesion. The N-terminal half is responsible for the 3' incision and the C-terminal half is responsible for the 5' incision. This is UvrABC system protein C from Thermotoga sp. (strain RQ2).